The primary structure comprises 3416 residues: Genome polyprotein (3416 aa).

The disordered stretch occupies residues 1–34 (MAKGAVLKGKGGGPPRRVPKETAKKTRQGPGRLP). Residues 1–99 (MAKGAVLKGK…NRRRGKRRST (99 aa)) are Cytoplasmic-facing. Residues 97 to 117 (RSTTGLLTSILLACLATLVIS) constitute a propeptide, ER anchor for the capsid protein C, removed in mature form by serine protease NS3. A helical transmembrane segment spans residues 100-120 (TGLLTSILLACLATLVISATI). Topologically, residues 121–243 (RRERTGDMVI…HLTRVEGWVW (123 aa)) are extracellular. Asparagine 145 is a glycosylation site (N-linked (GlcNAc...) asparagine; by host). Residues 244-261 (KNKLLTMAFCAVVWMVTD) form a helical membrane-spanning segment. Serine 262 is a topological domain (cytoplasmic). A helical transmembrane segment spans residues 263–281 (LPTRFIVITVALCLAPTYA). Topologically, residues 282–728 (TRCTHLQNRD…HTAFGAAFNT (447 aa)) are extracellular. 6 cysteine pairs are disulfide-bonded: cysteine 284-cysteine 311, cysteine 341-cysteine 397, cysteine 341-cysteine 402, cysteine 355-cysteine 386, cysteine 373-cysteine 397, and cysteine 373-cysteine 402. A fusion peptide region spans residues 379–392 (DRGWGNHCGLFGKG). Residue asparagine 435 is glycosylated (N-linked (GlcNAc...) asparagine; by host). 2 disulfide bridges follow: cysteine 467-cysteine 571 and cysteine 588-cysteine 619. The chain crosses the membrane as a helical span at residues 729–749 (IFGGVGFLPRILLGVALAWLG). Over 750–756 (LNSRNPT) the chain is Cytoplasmic. The chain crosses the membrane as a helical span at residues 757-777 (LSVGFLITGGLVLTMTLGVGA). Over 778 to 1134 (DMGCAIDANR…RSMVLADNGA (357 aa)) the chain is Extracellular. Disulfide bonds link cysteine 781–cysteine 792, cysteine 832–cysteine 922, cysteine 957–cysteine 1002, cysteine 1059–cysteine 1108, cysteine 1070–cysteine 1092, and cysteine 1091–cysteine 1095. 3 N-linked (GlcNAc...) asparagine; by host glycosylation sites follow: asparagine 862, asparagine 985, and asparagine 1001. A helical transmembrane segment spans residues 1135-1155 (MLSEGGVPGIVAVFVVLELVI). Over 1156–1162 (RRRPTTG) the chain is Cytoplasmic. The chain crosses the membrane as a helical span at residues 1163 to 1183 (TSVVWCGVVVLGLVVTGLVTI). At 1184-1189 (EGLCRY) the chain is on the lumenal side. The chain crosses the membrane as a helical span at residues 1190–1210 (VVAVGILMSMELGPEIVALVL). The Cytoplasmic portion of the chain corresponds to 1211-1235 (LQAVFDMRTGLLVAFAVKRAYTTRE). The chain crosses the membrane as a helical span at residues 1236–1256 (AVVTYFLLLVLELGFPEASLS). Residues 1257-1295 (NIWKWADSLAMGTLILQACSQEGRARVGYLLAAMMTQKD) lie on the Lumenal side of the membrane. A helical membrane pass occupies residues 1296 to 1316 (MAIIHTGLTIFLSAATAMAVW). Residues 1317-1361 (SMIKGQRDQKGLSWATPLVGLFGGEGVGLRLLAFRRLAERRNRRS) lie on the Cytoplasmic side of the membrane. A helical membrane pass occupies residues 1362 to 1379 (FSEPLTVVGVMLTVASGM). Residues 1380 to 1384 (VRHTS) are Lumenal-facing. Residues 1385–1405 (QEALCALVAGAFLLLMMVLGT) traverse the membrane as a helical segment. The Cytoplasmic segment spans residues 1406–1458 (RKMQLIAEWCGEVEWNPDLVNEGGEVNLKVRQDAMGNLHLTEVEKEERAMALW). The tract at residues 1412–1451 (AEWCGEVEWNPDLVNEGGEVNLKVRQDAMGNLHLTEVEKE) is interacts with and activates NS3 protease. Residues 1459–1479 (LLAGLVASAFHWAGILIVLAI) constitute an intramembrane region (helical). Residues 1480 to 2162 (WTFFEMLSSG…RMAERDAPEA (683 aa)) lie on the Cytoplasmic side of the membrane. A Peptidase S7 domain is found at 1492–1671 (SELVFSGQGT…EAEKSRPELP (180 aa)). Active-site charge relay system; for serine protease NS3 activity residues include histidine 1545, aspartate 1569, and serine 1629. In terms of domain architecture, Helicase ATP-binding spans 1677–1833 (TGWMSKGQIT…ESNGAIMSEE (157 aa)). Position 1690–1697 (1690–1697 (MHPGSGKT)) interacts with ATP. The short motif at 1781–1784 (DEAH) is the DEAH box element. The Helicase C-terminal domain occupies 1844-2002 (GFDWITEYEG…TLRGPVATFY (159 aa)). An N6-acetyllysine; by host modification is found at lysine 1885. The helical transmembrane segment at 2163 to 2183 (FLTIVEVAVLGVATLGILWCF) threads the bilayer. The Lumenal segment spans residues 2184–2191 (VARTSVSR). An intramembrane region (helical) is located at residues 2192-2211 (MFLGTVVLFAALLLLWIGGV). Aspartate 2212 is a topological domain (lumenal). The chain crosses the membrane as a helical span at residues 2213–2233 (YGYMAGIALIFYIFLTVLQPE). At 2234-2246 (PGKQRSSDDNRLA) the chain is on the cytoplasmic side. The chain crosses the membrane as a helical span at residues 2247-2267 (YFLLGLLSLAGLVTANEMGML). Topologically, residues 2268–2301 (DKTKADLAGLMWHGEQRHPAWEEWTNVDIQPARS) are lumenal. Positions 2302–2322 (WGTYVLIVSLFTPYMLHQLQT) form an intramembrane region, helical. Topologically, residues 2323 to 2345 (KIQQLVNSSVASGAQAMRDLGGG) are lumenal. The segment at residues 2346-2366 (TPFFGVAGHVIALGVTSLVGA) is an intramembrane region (helical). Topologically, residues 2367 to 2368 (TP) are lumenal. A helical transmembrane segment spans residues 2369–2389 (LSLGLGVALAAFHLAIVASGL). The Cytoplasmic segment spans residues 2390-2432 (EAELTQRAHRVFFSAMVKNPMVDGDVINPFPDGEPKPVLYERR). The chain crosses the membrane as a helical span at residues 2433–2453 (MSLILAIALCMVSVVLNRTAA). The Lumenal segment spans residues 2454–2476 (SMTEAGAVGLAALGQLVHPETET). Residues 2477-2497 (LWTMPMACGMAGLVRGSFWGL) traverse the membrane as a helical segment. The Cytoplasmic portion of the chain corresponds to 2498–3416 (LPMGHRLWLK…WDLKLESNII (919 aa)). The 265-residue stretch at 2514 to 2778 (GGADGETLGD…EVDLGTGTRC (265 aa)) folds into the mRNA cap 0-1 NS5-type MT domain. Serine 2569 contacts S-adenosyl-L-methionine. Serine 2569 bears the Phosphoserine mark. Lysine 2574 functions as the For 2'-O-MTase activity in the catalytic mechanism. S-adenosyl-L-methionine contacts are provided by glycine 2599, tryptophan 2600, threonine 2617, isoleucine 2618, aspartate 2644, and valine 2645. Catalysis depends on aspartate 2659, which acts as the For 2'-O-MTase activity. S-adenosyl-L-methionine is bound at residue isoleucine 2660. Residues lysine 2696 and glutamate 2732 each act as for 2'-O-MTase activity in the active site. Positions 2732-2736 (EMYFS) are interaction with host SCRIB. An S-adenosyl-L-methionine-binding site is contributed by tyrosine 2734. Residues glutamate 2952, histidine 2956, cysteine 2961, and cysteine 2964 each contribute to the Zn(2+) site. The region spanning 3042–3191 (GLFYADDTAG…RPIDDRFGKA (150 aa)) is the RdRp catalytic domain. Residues histidine 3226, cysteine 3242, and cysteine 3361 each coordinate Zn(2+).

In the N-terminal section; belongs to the class I-like SAM-binding methyltransferase superfamily. mRNA cap 0-1 NS5-type methyltransferase family. In terms of assembly, homodimer. Interacts (via N-terminus) with host EXOC1 (via C-terminus); this interaction results in EXOC1 degradation through the proteasome degradation pathway. As to quaternary structure, forms heterodimers with envelope protein E in the endoplasmic reticulum and Golgi. Homodimer; in the endoplasmic reticulum and Golgi. Interacts with protein prM. Interacts with non-structural protein 1. In terms of assembly, homodimer; Homohexamer when secreted. Interacts with envelope protein E. As to quaternary structure, interacts (via N-terminus) with serine protease NS3. Forms a heterodimer with serine protease NS3. May form homooligomers. In terms of assembly, forms a heterodimer with NS2B. Interacts with NS4B. Interacts with unphosphorylated RNA-directed RNA polymerase NS5; this interaction stimulates RNA-directed RNA polymerase NS5 guanylyltransferase activity. As to quaternary structure, interacts with serine protease NS3. Homodimer. Interacts with host STAT2; this interaction inhibits the phosphorylation of the latter, and, when all viral proteins are present (polyprotein), targets STAT2 for degradation. Interacts with serine protease NS3. Post-translationally, specific enzymatic cleavages in vivo yield mature proteins. Cleavages in the lumen of endoplasmic reticulum are performed by host signal peptidase, whereas cleavages in the cytoplasmic side are performed by serine protease NS3. Signal cleavage at the 2K-4B site requires a prior NS3 protease-mediated cleavage at the 4A-2K site. In terms of processing, cleaved in post-Golgi vesicles by a host furin, releasing the mature small envelope protein M, and peptide pr. This cleavage is incomplete as up to 30% of viral particles still carry uncleaved prM. N-glycosylated. Post-translationally, N-glycosylated. The excreted form is glycosylated and this is required for efficient secretion of the protein from infected cells. In terms of processing, acetylated by host KAT5. Acetylation modulates NS3 RNA-binding and unwinding activities and plays an important positive role for viral replication. Phosphorylated on serines residues. This phosphorylation may trigger NS5 nuclear localization.

The protein resides in the virion. Its subcellular location is the host nucleus. The protein localises to the host cytoplasm. It localises to the host perinuclear region. It is found in the secreted. The protein resides in the virion membrane. Its subcellular location is the host endoplasmic reticulum membrane. It carries out the reaction Selective hydrolysis of -Xaa-Xaa-|-Yaa- bonds in which each of the Xaa can be either Arg or Lys and Yaa can be either Ser or Ala.. It catalyses the reaction RNA(n) + a ribonucleoside 5'-triphosphate = RNA(n+1) + diphosphate. The catalysed reaction is a ribonucleoside 5'-triphosphate + H2O = a ribonucleoside 5'-diphosphate + phosphate + H(+). The enzyme catalyses ATP + H2O = ADP + phosphate + H(+). It carries out the reaction a 5'-end (5'-triphosphoguanosine)-ribonucleoside in mRNA + S-adenosyl-L-methionine = a 5'-end (N(7)-methyl 5'-triphosphoguanosine)-ribonucleoside in mRNA + S-adenosyl-L-homocysteine. It catalyses the reaction a 5'-end (N(7)-methyl 5'-triphosphoguanosine)-ribonucleoside in mRNA + S-adenosyl-L-methionine = a 5'-end (N(7)-methyl 5'-triphosphoguanosine)-(2'-O-methyl-ribonucleoside) in mRNA + S-adenosyl-L-homocysteine + H(+). In terms of biological role, plays a role in virus budding by binding to the cell membrane and gathering the viral RNA into a nucleocapsid that forms the core of a mature virus particle. During virus entry, may induce genome penetration into the host cytoplasm after hemifusion induced by the surface proteins. Can migrate to the cell nucleus where it modulates host functions. Functionally, inhibits RNA silencing by interfering with host Dicer. Prevents premature fusion activity of envelope proteins in trans-Golgi by binding to envelope protein E at pH6.0. After virion release in extracellular space, gets dissociated from E dimers. Its function is as follows. Acts as a chaperone for envelope protein E during intracellular virion assembly by masking and inactivating envelope protein E fusion peptide. prM is the only viral peptide matured by host furin in the trans-Golgi network probably to avoid catastrophic activation of the viral fusion activity in acidic Golgi compartment prior to virion release. prM-E cleavage is inefficient, and many virions are only partially matured. These uncleaved prM would play a role in immune evasion. In terms of biological role, may play a role in virus budding. Exerts cytotoxic effects by activating a mitochondrial apoptotic pathway through M ectodomain. May display a viroporin activity. Functionally, binds to host cell surface receptor and mediates fusion between viral and cellular membranes. Envelope protein is synthesized in the endoplasmic reticulum in the form of heterodimer with protein prM. They play a role in virion budding in the ER, and the newly formed immature particle is covered with 60 spikes composed of heterodimer between precursor prM and envelope protein E. The virion is transported to the Golgi apparatus where the low pH causes dissociation of PrM-E heterodimers and formation of E homodimers. prM-E cleavage is inefficient, and many virions are only partially matured. These uncleaved prM would play a role in immune evasion. Involved in immune evasion, pathogenesis and viral replication. Once cleaved off the polyprotein, is targeted to three destinations: the viral replication cycle, the plasma membrane and the extracellular compartment. Essential for viral replication. Required for formation of the replication complex and recruitment of other non-structural proteins to the ER-derived membrane structures. Excreted as a hexameric lipoparticle that plays a role against host immune response. Antagonizing the complement function. Binds to the host macrophages and dendritic cells. Inhibits signal transduction originating from Toll-like receptor 3 (TLR3). Its function is as follows. Component of the viral RNA replication complex that functions in virion assembly and antagonizes the host immune response. In terms of biological role, required cofactor for the serine protease function of NS3. May have membrane-destabilizing activity and form viroporins. Functionally, displays three enzymatic activities: serine protease, NTPase and RNA helicase. NS3 serine protease, in association with NS2B, performs its autocleavage and cleaves the polyprotein at dibasic sites in the cytoplasm: C-prM, NS2A-NS2B, NS2B-NS3, NS3-NS4A, NS4A-2K and NS4B-NS5. NS3 RNA helicase binds RNA and unwinds dsRNA in the 3' to 5' direction. Regulates the ATPase activity of the NS3 helicase activity. NS4A allows NS3 helicase to conserve energy during unwinding. Its function is as follows. Functions as a signal peptide for NS4B and is required for the interferon antagonism activity of the latter. In terms of biological role, induces the formation of ER-derived membrane vesicles where the viral replication takes place. Inhibits interferon (IFN)-induced host STAT1 phosphorylation and nuclear translocation, thereby preventing the establishment of cellular antiviral state by blocking the IFN-alpha/beta pathway. Inhibits STAT2 translocation in the nucleus after IFN-alpha treatment. Functionally, replicates the viral (+) and (-) RNA genome, and performs the capping of genomes in the cytoplasm. NS5 methylates viral RNA cap at guanine N-7 and ribose 2'-O positions. Besides its role in RNA genome replication, also prevents the establishment of cellular antiviral state by blocking the interferon-alpha/beta (IFN-alpha/beta) signaling pathway. Inhibits host TYK2 and STAT2 phosphorylation, thereby preventing activation of JAK-STAT signaling pathway. The sequence is that of Genome polyprotein from Homo sapiens (Human).